Here is a 393-residue protein sequence, read N- to C-terminus: NAD(P)H-quinone oxidoreductase subunit H, chloroplastic (393 aa).

The protein belongs to the complex I 49 kDa subunit family. NDH is composed of at least 16 different subunits, 5 of which are encoded in the nucleus.

Its subcellular location is the plastid. The protein resides in the chloroplast thylakoid membrane. The enzyme catalyses a plastoquinone + NADH + (n+1) H(+)(in) = a plastoquinol + NAD(+) + n H(+)(out). It catalyses the reaction a plastoquinone + NADPH + (n+1) H(+)(in) = a plastoquinol + NADP(+) + n H(+)(out). Its function is as follows. NDH shuttles electrons from NAD(P)H:plastoquinone, via FMN and iron-sulfur (Fe-S) centers, to quinones in the photosynthetic chain and possibly in a chloroplast respiratory chain. The immediate electron acceptor for the enzyme in this species is believed to be plastoquinone. Couples the redox reaction to proton translocation, and thus conserves the redox energy in a proton gradient. This is NAD(P)H-quinone oxidoreductase subunit H, chloroplastic from Lepidium virginicum (Virginia pepperweed).